We begin with the raw amino-acid sequence, 299 residues long: Phosphoribosylaminoimidazole-succinocarboxamide synthase (299 aa).

The protein belongs to the SAICAR synthetase family.

It carries out the reaction 5-amino-1-(5-phospho-D-ribosyl)imidazole-4-carboxylate + L-aspartate + ATP = (2S)-2-[5-amino-1-(5-phospho-beta-D-ribosyl)imidazole-4-carboxamido]succinate + ADP + phosphate + 2 H(+). The protein operates within purine metabolism; IMP biosynthesis via de novo pathway; 5-amino-1-(5-phospho-D-ribosyl)imidazole-4-carboxamide from 5-amino-1-(5-phospho-D-ribosyl)imidazole-4-carboxylate: step 1/2. The chain is Phosphoribosylaminoimidazole-succinocarboxamide synthase from Desulfatibacillum aliphaticivorans.